The following is a 670-amino-acid chain: Neutral ceramidase (670 aa).

The first 24 residues, M1–A24, serve as a signal peptide directing secretion. H61 contacts Mg(2+). Substrate is bound by residues N84, Q92, and D111. H121 provides a ligand contact to Zn(2+). Position 130 (S130) interacts with substrate. Residue H228 participates in Zn(2+) binding. The active-site Nucleophile is the S274. C346 and C394 are oxidised to a cystine. E435 is a Zn(2+) binding site. A substrate-binding site is contributed by Y469. Y472 contacts Zn(2+). Residues D603, D605, and T608 each coordinate Mg(2+). A required for correct folding and localization region spans residues N644–P670.

Belongs to the neutral ceramidase family. In terms of assembly, homodimer. It depends on Zn(2+) as a cofactor. The cofactor is Mg(2+).

It localises to the secreted. It carries out the reaction an N-acylsphing-4-enine + H2O = sphing-4-enine + a fatty acid. With respect to regulation, inhibited by EDTA, EGTA and D/L-sphinganine D-erythro-sphingosine. L-erythro-sphingosine is a less powerful inhibitor. Stimulated by glycerophospholipids: cardiolipin is the most effective, followed by phosphatidic acid, phosphatidylethanolamine and phosphatidylglycerol, whereas phosphatidylcholine, lysophosphatidic acid and diacylglycerol are less effective. Catalyzes the cleavage of the N-acyl linkage of the ceramides (Cers) to yield sphingosine (Sph) and free fatty acid at an optimal pH of 8-9. Also catalyzes the synthesis of Cers from Sph and fatty acid. The sequence is that of Neutral ceramidase from Pseudomonas aeruginosa (strain ATCC 15692 / DSM 22644 / CIP 104116 / JCM 14847 / LMG 12228 / 1C / PRS 101 / PAO1).